A 408-amino-acid chain; its full sequence is Peptidase T (408 aa).

H78 is a Zn(2+) binding site. The active site involves D80. Position 141 (D141) interacts with Zn(2+). E175 serves as the catalytic Proton acceptor. E176, D198, and H380 together coordinate Zn(2+).

This sequence belongs to the peptidase M20B family. Zn(2+) serves as cofactor.

The protein localises to the cytoplasm. The catalysed reaction is Release of the N-terminal residue from a tripeptide.. Cleaves the N-terminal amino acid of tripeptides. This Clostridium botulinum (strain Kyoto / Type A2) protein is Peptidase T.